Reading from the N-terminus, the 387-residue chain is Large ribosomal subunit protein uL3 (387 aa).

The residue at position 24 (Ser-24) is a Phosphoserine. Lys-39 participates in a covalent cross-link: Glycyl lysine isopeptide (Lys-Gly) (interchain with G-Cter in ubiquitin). Thr-103 is modified (phosphothreonine). Lys-136 is covalently cross-linked (Glycyl lysine isopeptide (Lys-Gly) (interchain with G-Cter in ubiquitin)). Phosphoserine is present on Ser-156. At His-243 the chain carries Pros-methylhistidine. At Ser-297 the chain carries Phosphoserine.

The protein belongs to the universal ribosomal protein uL3 family. Component of the large ribosomal subunit (LSU). Mature yeast ribosomes consist of a small (40S) and a large (60S) subunit. The 40S small subunit contains 1 molecule of ribosomal RNA (18S rRNA) and 33 different proteins (encoded by 57 genes). The large 60S subunit contains 3 rRNA molecules (25S, 5.8S and 5S rRNA) and 46 different proteins (encoded by 81 genes). uL3 forms together with ES39L one of the contact sites for the signal recognition particle that targets ribosomes to the endoplasmic reticulum membrane. In terms of processing, methylation at His-243 by HPM1 is required for proper 60S subunit assembly and promotes translational elongation fidelity.

The protein localises to the cytoplasm. Component of the ribosome, a large ribonucleoprotein complex responsible for the synthesis of proteins in the cell. The small ribosomal subunit (SSU) binds messenger RNAs (mRNAs) and translates the encoded message by selecting cognate aminoacyl-transfer RNA (tRNA) molecules. The large subunit (LSU) contains the ribosomal catalytic site termed the peptidyl transferase center (PTC), which catalyzes the formation of peptide bonds, thereby polymerizing the amino acids delivered by tRNAs into a polypeptide chain. The nascent polypeptides leave the ribosome through a tunnel in the LSU and interact with protein factors that function in enzymatic processing, targeting, and the membrane insertion of nascent chains at the exit of the ribosomal tunnel. uL3 plays a role in coordinating processes of accommodating the aminoacyl-tRNA in the PTC. This chain is Large ribosomal subunit protein uL3, found in Saccharomyces cerevisiae (strain ATCC 204508 / S288c) (Baker's yeast).